We begin with the raw amino-acid sequence, 620 residues long: Chaperone protein DnaK (620 aa).

Thr197 is modified (phosphothreonine; by autocatalysis). Residues 591–620 (AQKLGEAMANKNNAEQPKKKDDDVIDAEVE) are disordered.

It belongs to the heat shock protein 70 family.

Acts as a chaperone. This chain is Chaperone protein DnaK, found in Helicobacter pylori (strain HPAG1).